The following is a 349-amino-acid chain: Anthranilate phosphoribosyltransferase (349 aa).

Residues G82, 85–86 (GD), 92–95 (NVST), 110–118 (KHGNRAVSG), and S122 contribute to the 5-phospho-alpha-D-ribose 1-diphosphate site. G82 serves as a coordination point for anthranilate. Mg(2+) is bound at residue S94. Position 113 (N113) interacts with anthranilate. Residue R168 coordinates anthranilate. The Mg(2+) site is built by D227 and E228.

Belongs to the anthranilate phosphoribosyltransferase family. Homodimer. It depends on Mg(2+) as a cofactor.

The catalysed reaction is N-(5-phospho-beta-D-ribosyl)anthranilate + diphosphate = 5-phospho-alpha-D-ribose 1-diphosphate + anthranilate. Its pathway is amino-acid biosynthesis; L-tryptophan biosynthesis; L-tryptophan from chorismate: step 2/5. Functionally, catalyzes the transfer of the phosphoribosyl group of 5-phosphorylribose-1-pyrophosphate (PRPP) to anthranilate to yield N-(5'-phosphoribosyl)-anthranilate (PRA). This Pseudomonas putida (Arthrobacter siderocapsulatus) protein is Anthranilate phosphoribosyltransferase.